The sequence spans 428 residues: D-alanine--D-alanine ligase (428 aa).

An ATP-grasp domain is found at 205 to 424 (KVVLDAAGIP…YTELITRLIE (220 aa)). 237–299 (DAGLTYPLFV…EQGIDGREIE (63 aa)) is a binding site for ATP. Positions 378, 391, and 393 each coordinate Mg(2+).

Belongs to the D-alanine--D-alanine ligase family. Mg(2+) serves as cofactor. Mn(2+) is required as a cofactor.

It localises to the cytoplasm. The enzyme catalyses 2 D-alanine + ATP = D-alanyl-D-alanine + ADP + phosphate + H(+). The protein operates within cell wall biogenesis; peptidoglycan biosynthesis. Cell wall formation. The polypeptide is D-alanine--D-alanine ligase (Bifidobacterium longum (strain NCC 2705)).